A 168-amino-acid polypeptide reads, in one-letter code: Peptide deformylase (168 aa).

C92 and H134 together coordinate Fe cation. Residue E135 is part of the active site. H138 provides a ligand contact to Fe cation.

It belongs to the polypeptide deformylase family. Fe(2+) serves as cofactor.

It carries out the reaction N-terminal N-formyl-L-methionyl-[peptide] + H2O = N-terminal L-methionyl-[peptide] + formate. Functionally, removes the formyl group from the N-terminal Met of newly synthesized proteins. Requires at least a dipeptide for an efficient rate of reaction. N-terminal L-methionine is a prerequisite for activity but the enzyme has broad specificity at other positions. This chain is Peptide deformylase, found in Pseudomonas aeruginosa (strain ATCC 15692 / DSM 22644 / CIP 104116 / JCM 14847 / LMG 12228 / 1C / PRS 101 / PAO1).